A 225-amino-acid polypeptide reads, in one-letter code: Protein-L-isoaspartate O-methyltransferase (225 aa).

Residue serine 75 is part of the active site.

The protein belongs to the methyltransferase superfamily. L-isoaspartyl/D-aspartyl protein methyltransferase family.

It is found in the cytoplasm. The catalysed reaction is [protein]-L-isoaspartate + S-adenosyl-L-methionine = [protein]-L-isoaspartate alpha-methyl ester + S-adenosyl-L-homocysteine. In terms of biological role, catalyzes the methyl esterification of L-isoaspartyl residues in peptides and proteins that result from spontaneous decomposition of normal L-aspartyl and L-asparaginyl residues. It plays a role in the repair and/or degradation of damaged proteins. The polypeptide is Protein-L-isoaspartate O-methyltransferase (Stenotrophomonas maltophilia (strain K279a)).